We begin with the raw amino-acid sequence, 550 residues long: GMP synthase [glutamine-hydrolyzing] (550 aa).

Residues arginine 39–leucine 232 form the Glutamine amidotransferase type-1 domain. Cysteine 116 serves as the catalytic Nucleophile. Active-site residues include histidine 206 and glutamate 208. Residues tryptophan 233–arginine 425 enclose the GMPS ATP-PPase domain. Serine 260 to serine 266 is an ATP binding site.

In terms of assembly, homodimer.

The enzyme catalyses XMP + L-glutamine + ATP + H2O = GMP + L-glutamate + AMP + diphosphate + 2 H(+). Its pathway is purine metabolism; GMP biosynthesis; GMP from XMP (L-Gln route): step 1/1. Its function is as follows. Catalyzes the synthesis of GMP from XMP. The sequence is that of GMP synthase [glutamine-hydrolyzing] from Acinetobacter baylyi (strain ATCC 33305 / BD413 / ADP1).